The sequence spans 301 residues: Glycine--tRNA ligase alpha subunit (301 aa).

The protein belongs to the class-II aminoacyl-tRNA synthetase family. As to quaternary structure, tetramer of two alpha and two beta subunits.

It is found in the cytoplasm. The catalysed reaction is tRNA(Gly) + glycine + ATP = glycyl-tRNA(Gly) + AMP + diphosphate. In Shewanella oneidensis (strain ATCC 700550 / JCM 31522 / CIP 106686 / LMG 19005 / NCIMB 14063 / MR-1), this protein is Glycine--tRNA ligase alpha subunit.